The chain runs to 553 residues: ATP synthase F(1) complex subunit alpha, mitochondrial (553 aa).

The N-terminal 43 residues, 1–43, are a transit peptide targeting the mitochondrion; sequence MLSVRVAAAVARALPRRAGLVSKNALGSSFIAARNLHASNSRL. Residue Gln44 is modified to Pyrrolidone carboxylic acid. 2 positions are modified to phosphoserine: Ser53 and Ser65. Ser76 is modified (phosphoserine; alternate). O-linked (GlcNAc) serine; alternate glycosylation occurs at Ser76. Ser106 is subject to Phosphoserine. 3 positions are modified to N6-acetyllysine: Lys123, Lys126, and Lys132. At Thr134 the chain carries Phosphothreonine. At Lys161 the chain carries N6-acetyllysine; alternate. Position 161 is an N6-succinyllysine; alternate (Lys161). Ser166 bears the Phosphoserine mark. The residue at position 167 (Lys167) is an N6-acetyllysine; alternate. At Lys167 the chain carries N6-succinyllysine; alternate. Position 184 is a phosphoserine (Ser184). Residue Arg204 is modified to Omega-N-methylarginine. ATP-binding residues include Gln215, Gly217, Lys218, Thr219, and Ser220. Thr219 is a Mg(2+) binding site. Residues Lys230 and Lys239 each carry the N6-acetyllysine; alternate modification. Residues Lys230 and Lys239 each carry the N6-succinyllysine; alternate modification. Lys240 bears the N6-acetyllysine mark. An N6-acetyllysine; alternate mark is found at Lys261 and Lys305. Residues Lys261 and Lys305 each carry the N6-succinyllysine; alternate modification. A Mg(2+)-binding site is contributed by Asp312. Residue Lys427 is modified to N6-acetyllysine; alternate. Position 427 is an N6-succinyllysine; alternate (Lys427). The residue at position 434 (Lys434) is an N6-acetyllysine. Positions 473 and 475 each coordinate ATP. An N6-acetyllysine; alternate mark is found at Lys498, Lys506, Lys531, and Lys539. An N6-succinyllysine; alternate mark is found at Lys498, Lys506, Lys531, and Lys539. Lys541 bears the N6-acetyllysine mark.

Belongs to the ATPase alpha/beta chains family. In terms of assembly, homotrimer. Component of the ATP synthase complex composed at least of ATP5F1A/subunit alpha, ATP5F1B/subunit beta, ATP5MC1/subunit c (homooctomer), MT-ATP6/subunit a, MT-ATP8/subunit 8, ATP5ME/subunit e, ATP5MF/subunit f, ATP5MG/subunit g, ATP5MK/subunit k, ATP5MJ/subunit j, ATP5F1C/subunit gamma, ATP5F1D/subunit delta, ATP5F1E/subunit epsilon, ATP5PF/subunit F6, ATP5PB/subunit b, ATP5PD/subunit d, ATP5PO/subunit OSCP. ATP synthase complex consists of a soluble F(1) head domain (subunits alpha(3) and beta(3)) - the catalytic core - and a membrane F(0) domain - the membrane proton channel (subunits c, a, 8, e, f, g, k and j). These two domains are linked by a central stalk (subunits gamma, delta, and epsilon) rotating inside the F1 region and a stationary peripheral stalk (subunits F6, b, d, and OSCP). Interacts with ATPAF2. Interacts with HRG; the interaction occurs on the surface of T-cells and alters the cell morphology when associated with concanavalin (in vitro). Interacts with PLG (angiostatin peptide); the interaction inhibits most of the angiogenic properties of angiostatin. Interacts with BLOC1S1. Interacts with BCL2L1 isoform BCL-X(L); the interaction mediates the association of BCL2L1 isoform BCL-X(L) with the mitochondrial membrane F(1)F(0) ATP synthase and enhances neurons metabolic efficiency. Interacts with CLN5 and PPT1. Interacts with S100A1; this interaction increases F1-ATPase activity. Interacts with ABCB7; this interaction allows the regulation of cellular iron homeostasis and cellular reactive oxygen species (ROS) levels in cardiomyocytes. In terms of processing, acetylated on lysine residues. BLOC1S1 is required for acetylation. Heart muscle (at protein level). Heart and liver.

The protein localises to the mitochondrion inner membrane. The protein resides in the cell membrane. Subunit alpha, of the mitochondrial membrane ATP synthase complex (F(1)F(0) ATP synthase or Complex V) that produces ATP from ADP in the presence of a proton gradient across the membrane which is generated by electron transport complexes of the respiratory chain. ATP synthase complex consist of a soluble F(1) head domain - the catalytic core - and a membrane F(1) domain - the membrane proton channel. These two domains are linked by a central stalk rotating inside the F(1) region and a stationary peripheral stalk. During catalysis, ATP synthesis in the catalytic domain of F(1) is coupled via a rotary mechanism of the central stalk subunits to proton translocation. In vivo, can only synthesize ATP although its ATP hydrolase activity can be activated artificially in vitro. With the catalytic subunit beta (ATP5F1B), forms the catalytic core in the F(1) domain. Subunit alpha does not bear the catalytic high-affinity ATP-binding sites. The chain is ATP synthase F(1) complex subunit alpha, mitochondrial from Bos taurus (Bovine).